The sequence spans 429 residues: MNQNVVIIGTQWGDEGKGKIVDWLTERCQAVVRFQGGHNAGHTLVIGARKTILHLIPSGILRADVSCFIGNGVVLDPLALFSELDELRPVVPDAQERLFISDACPLILPYHKSLDRAREQAMGAAKIGTTGRGIGPAYEDKVRRRALRVADLFHRERFAAKLAEALDYHNFVLQHYFKREPENFHAILEQYLELADGLAPMVVDVSVRLARLQAEGARILFEGAQGTLLDVDHGTYPFVTSSNTVAGGASAGSGVGPADLGYVLGITKAYTTRVGAGPFPTELFDETGVFLAERGAEVGATTGRARRCGWFDAVALRAACRVNGVTGLCITKLDVLDGLAEIRVAVGYRVNGVVQEELPGGAEALAACEPIYESFPGWSESTAGVRHWADLPQAARCYLEAIAERAERPLAIISTGPDRDDTILRTEIL.

GTP-binding positions include 13-19 and 41-43; these read GDEGKGK and GHT. D14 serves as the catalytic Proton acceptor. The Mg(2+) site is built by D14 and G41. IMP-binding positions include 14–17, 39–42, T130, R144, Q225, T240, and R304; these read DEGK and NAGH. The Proton donor role is filled by H42. 300-306 serves as a coordination point for substrate; sequence ATTGRAR. GTP is bound by residues R306, 332-334, and 414-416; these read KLD and STG.

Belongs to the adenylosuccinate synthetase family. In terms of assembly, homodimer. Requires Mg(2+) as cofactor.

The protein resides in the cytoplasm. It carries out the reaction IMP + L-aspartate + GTP = N(6)-(1,2-dicarboxyethyl)-AMP + GDP + phosphate + 2 H(+). Its pathway is purine metabolism; AMP biosynthesis via de novo pathway; AMP from IMP: step 1/2. Plays an important role in the de novo pathway of purine nucleotide biosynthesis. Catalyzes the first committed step in the biosynthesis of AMP from IMP. In Acidithiobacillus ferrooxidans (Thiobacillus ferrooxidans), this protein is Adenylosuccinate synthetase.